A 170-amino-acid chain; its full sequence is 4-hydroxyphenylacetate 3-monooxygenase reductase component (170 aa).

It belongs to the non-flavoprotein flavin reductase family. HpaC subfamily. As to quaternary structure, homodimer. 4-HPA 3-monooxygenase consists of a reductase component HpaC and an oxygenase component HpaB.

It catalyses the reaction a reduced flavin + NAD(+) = an oxidized flavin + NADH + 2 H(+). Its pathway is aromatic compound metabolism; 4-hydroxyphenylacetate degradation; pyruvate and succinate semialdehyde from 4-hydroxyphenylacetate: step 1/7. Its function is as follows. Catalyzes the reduction of free flavins (FMN, FAD and riboflavin) by NADH. Subsequently, the reduced flavins diffuse to the large HpaB component or to other electron acceptors such as cytochrome c and Fe(3+) ion. The polypeptide is 4-hydroxyphenylacetate 3-monooxygenase reductase component (hpaC) (Escherichia coli).